We begin with the raw amino-acid sequence, 425 residues long: uncharacterized protein (425 aa).

The CHY-type zinc finger occupies 135–202; that stretch reads KEQEILGCSH…AAQYCKYCKN (68 aa). Zn(2+) is bound by residues C142, H144, C153, C156, C162, C165, H166, H172, C184, C187, C197, C200, C209, C212, H225, C226, C229, C232, H244, C245, C248, C251, H260, and C262. The CTCHY-type zinc finger occupies 204-270; that stretch reads MGRYYCNKCK…RCIERSTDCN (67 aa). The RING-type; atypical zinc-finger motif lies at 271 to 313; the sequence is CPICGEYMFNSRERVIFLSCSHPLHQRCHEEYIRTNYRCPTCY.

This is an uncharacterized protein from Schizosaccharomyces pombe (strain 972 / ATCC 24843) (Fission yeast).